The primary structure comprises 174 residues: RNA polymerase sigma factor CarQ (174 aa).

The Polymerase core binding signature appears at 39-52 (DLLQATFLSVIRSR). Residues 86-106 (YASREDTATPASAAPDDSDPS) form a disordered region. Positions 136–155 (FEEIGALRGISPGAARLRAH) form a DNA-binding region, H-T-H motif.

This sequence belongs to the sigma-70 factor family. ECF subfamily.

Functionally, sigma factors are initiation factors that promote the attachment of RNA polymerase to specific initiation sites and are then released. This sigma factor regulates genes for the light induced biosynthesis of carotenoids. This Myxococcus xanthus protein is RNA polymerase sigma factor CarQ (carQ).